A 79-amino-acid chain; its full sequence is Small ribosomal subunit protein bS18 (79 aa).

The protein belongs to the bacterial ribosomal protein bS18 family. Part of the 30S ribosomal subunit. Forms a tight heterodimer with protein bS6.

Binds as a heterodimer with protein bS6 to the central domain of the 16S rRNA, where it helps stabilize the platform of the 30S subunit. The protein is Small ribosomal subunit protein bS18 of Ureaplasma parvum serovar 3 (strain ATCC 27815 / 27 / NCTC 11736).